The sequence spans 207 residues: SPRY domain-containing protein 4 (207 aa).

In terms of domain architecture, B30.2/SPRY spans 12 to 207; sequence YRWGTKRWGV…HSGLEVPKGL (196 aa). An N6-acetyllysine mark is found at Lys-53 and Lys-130. Lys-139 carries the N6-succinyllysine modification.

The chain is SPRY domain-containing protein 4 (Spryd4) from Rattus norvegicus (Rat).